The sequence spans 1031 residues: Zinc finger protein 445 (1031 aa).

The tract at residues 1–43 is disordered; that stretch reads MPPGRWHAAYPAQAQSSRERGRLQTVKKEEEDESYTPVQAARP. The span at 17–29 shows a compositional bias: basic and acidic residues; the sequence is SRERGRLQTVKKE. Lys-28 is covalently cross-linked (Glycyl lysine isopeptide (Lys-Gly) (interchain with G-Cter in SUMO1)). The region spanning 55–137 is the SCAN box domain; sequence RQLFRQLRYH…ALLEELQRDL (83 aa). The 71-residue stretch at 234 to 304 folds into the KRAB domain; it reads MTFKDVEVTF…NMQAAQPKGN (71 aa). Residues Lys-317, Lys-374, Lys-375, and Lys-399 each participate in a glycyl lysine isopeptide (Lys-Gly) (interchain with G-Cter in SUMO2) cross-link. 3 consecutive C2H2-type zinc fingers follow at residues 485–507, 513–535, and 541–563; these read FKCS…QRLH, FKCR…EKIH, and YKCD…RETH. A Glycyl lysine isopeptide (Lys-Gly) (interchain with G-Cter in SUMO2) cross-link involves residue Lys-567. 2 C2H2-type zinc fingers span residues 597–619 and 625–647; these read FDCS…QRIH and YKCT…MRLH. Residue Lys-654 forms a Glycyl lysine isopeptide (Lys-Gly) (interchain with G-Cter in SUMO2) linkage. C2H2-type zinc fingers lie at residues 681-703 and 709-731; these read FLCQ…QRIH and YQCS…KKKH. Glycyl lysine isopeptide (Lys-Gly) (interchain with G-Cter in SUMO2) cross-links involve residues Lys-736 and Lys-758. 5 C2H2-type zinc fingers span residues 762-784, 790-812, 840-862, 868-890, and 896-918; these read YKCS…QRVH, YKCR…QRIH, FWCQ…KGIH, YKCN…QRIH, and FKCQ…QRKH. Positions 911–939 are disordered; sequence LSSHQRKHTRAAQAERSPPARSSSQDTKL. Residues Lys-938, Lys-956, and Lys-975 each participate in a glycyl lysine isopeptide (Lys-Gly) (interchain with G-Cter in SUMO2) cross-link. 2 C2H2-type zinc fingers span residues 978-1000 and 1006-1028; these read HKCS…KRFH and FKCS…MKNH.

It belongs to the krueppel C2H2-type zinc-finger protein family.

The protein resides in the nucleus. In terms of biological role, transcription regulator required to maintain maternal and paternal gene imprinting, a process by which gene expression is restricted in a parent of origin-specific manner by epigenetic modification of genomic DNA and chromatin, including DNA methylation. Acts by controlling DNA methylation during the earliest multicellular stages of development at multiple imprinting control regions (ICRs). Acts together with ZFP57, but seems to be the major factor in human early embryonic imprinting maintenance. In contrast, in mice, ZFP57 plays the predominant role in imprinting maintenance. In Homo sapiens (Human), this protein is Zinc finger protein 445.